We begin with the raw amino-acid sequence, 481 residues long: uncharacterized protein (481 aa).

A run of 10 helical transmembrane segments spans residues 30–50, 96–116, 154–174, 196–216, 220–240, 250–270, 311–331, 354–374, 391–411, and 424–444; these read TIII…FVQF, AIAL…FIGM, CMAV…FNSV, ISLV…IAII, LVPM…GMHI, IVQS…ALVS, MLGV…IILL, IGEF…YSSI, KPWL…FGAV, and VMAV…PIVW.

Belongs to the alanine or glycine:cation symporter (AGCS) (TC 2.A.25) family.

It localises to the cell inner membrane. This is an uncharacterized protein from Haemophilus influenzae (strain ATCC 51907 / DSM 11121 / KW20 / Rd).